A 433-amino-acid chain; its full sequence is Bifunctional protein GlmU (433 aa).

The interval 1-226 is pyrophosphorylase; sequence MLSVIILAAG…EECFLGVNSQ (226 aa). Residues 7–10, lysine 21, and 80–81 each bind UDP-N-acetyl-alpha-D-glucosamine; these read LAAG and GT. Residue aspartate 106 coordinates Mg(2+). 4 residues coordinate UDP-N-acetyl-alpha-D-glucosamine: glycine 138, glutamate 152, asparagine 167, and asparagine 224. Mg(2+) is bound at residue asparagine 224. The interval 227 to 247 is linker; that stretch reads TERAKAEEIMLERLRKNAMDL. The tract at residues 248 to 433 is N-acetyltransferase; it reads GVVMQLPSSI…NGYFKFFKKP (186 aa). UDP-N-acetyl-alpha-D-glucosamine-binding residues include arginine 311 and lysine 328. The active-site Proton acceptor is histidine 339. UDP-N-acetyl-alpha-D-glucosamine is bound by residues tyrosine 342 and asparagine 353. Residues alanine 356, 362–363, serine 381, serine 399, and arginine 416 each bind acetyl-CoA; that span reads NY.

In the N-terminal section; belongs to the N-acetylglucosamine-1-phosphate uridyltransferase family. This sequence in the C-terminal section; belongs to the transferase hexapeptide repeat family. As to quaternary structure, homotrimer. Mg(2+) is required as a cofactor.

Its subcellular location is the cytoplasm. The enzyme catalyses alpha-D-glucosamine 1-phosphate + acetyl-CoA = N-acetyl-alpha-D-glucosamine 1-phosphate + CoA + H(+). It carries out the reaction N-acetyl-alpha-D-glucosamine 1-phosphate + UTP + H(+) = UDP-N-acetyl-alpha-D-glucosamine + diphosphate. It participates in nucleotide-sugar biosynthesis; UDP-N-acetyl-alpha-D-glucosamine biosynthesis; N-acetyl-alpha-D-glucosamine 1-phosphate from alpha-D-glucosamine 6-phosphate (route II): step 2/2. Its pathway is nucleotide-sugar biosynthesis; UDP-N-acetyl-alpha-D-glucosamine biosynthesis; UDP-N-acetyl-alpha-D-glucosamine from N-acetyl-alpha-D-glucosamine 1-phosphate: step 1/1. The protein operates within bacterial outer membrane biogenesis; LPS lipid A biosynthesis. Its function is as follows. Catalyzes the last two sequential reactions in the de novo biosynthetic pathway for UDP-N-acetylglucosamine (UDP-GlcNAc). The C-terminal domain catalyzes the transfer of acetyl group from acetyl coenzyme A to glucosamine-1-phosphate (GlcN-1-P) to produce N-acetylglucosamine-1-phosphate (GlcNAc-1-P), which is converted into UDP-GlcNAc by the transfer of uridine 5-monophosphate (from uridine 5-triphosphate), a reaction catalyzed by the N-terminal domain. This Helicobacter pylori (strain HPAG1) protein is Bifunctional protein GlmU.